We begin with the raw amino-acid sequence, 662 residues long: Transcription activator of gluconeogenesis NECHADRAFT_59099 (662 aa).

Residues 1-61 (MPHEMEENGA…KDPLRPRRKK (61 aa)) are disordered. Basic and acidic residues-rich tracts occupy residues 25–34 (TFLKDDEKMT) and 43–56 (TEVK…DPLR). A DNA-binding region (zn(2)-C6 fungal-type) is located at residues 66 to 94 (CFACQRAHLTCGDERPCQRCIKRGLADAC). Disordered regions lie at residues 105–149 (LHDA…TGSN), 502–524 (YSGR…MTTP), and 580–606 (YRAP…SSRV). Composition is skewed to polar residues over residues 121–130 (YNPTPTPSRT) and 137–149 (SSQS…TGSN). Residues 448-519 (TLVEYDDFLQ…TNTPDHNSQG (72 aa)) form the PAS domain. Residues 582–593 (APQDPDQKEPGS) show a composition bias toward basic and acidic residues.

This sequence belongs to the ERT1/acuK family.

Its subcellular location is the nucleus. In terms of biological role, transcription factor which regulates nonfermentable carbon utilization. Activator of gluconeogenetic genes. This chain is Transcription activator of gluconeogenesis NECHADRAFT_59099, found in Fusarium vanettenii (strain ATCC MYA-4622 / CBS 123669 / FGSC 9596 / NRRL 45880 / 77-13-4) (Fusarium solani subsp. pisi).